Consider the following 118-residue polypeptide: Small ribosomal subunit protein uS13 (118 aa).

Residues 91–118 (HRRGLPVRGQRTKTNARTRKGPRKPIKK) form a disordered region.

It belongs to the universal ribosomal protein uS13 family. As to quaternary structure, part of the 30S ribosomal subunit. Forms a loose heterodimer with protein S19. Forms two bridges to the 50S subunit in the 70S ribosome.

Located at the top of the head of the 30S subunit, it contacts several helices of the 16S rRNA. In the 70S ribosome it contacts the 23S rRNA (bridge B1a) and protein L5 of the 50S subunit (bridge B1b), connecting the 2 subunits; these bridges are implicated in subunit movement. Contacts the tRNAs in the A and P-sites. This Pectobacterium atrosepticum (strain SCRI 1043 / ATCC BAA-672) (Erwinia carotovora subsp. atroseptica) protein is Small ribosomal subunit protein uS13.